A 274-amino-acid chain; its full sequence is Pantothenate synthetase (274 aa).

27–34 (MGALHKGH) contributes to the ATP binding site. The active-site Proton donor is the His-34. Gln-58 is a (R)-pantoate binding site. Gln-58 serves as a coordination point for beta-alanine. 145–148 (GQKD) is an ATP binding site. Gln-151 is a (R)-pantoate binding site. 182–185 (LSSR) provides a ligand contact to ATP.

The protein belongs to the pantothenate synthetase family. In terms of assembly, homodimer.

It localises to the cytoplasm. The enzyme catalyses (R)-pantoate + beta-alanine + ATP = (R)-pantothenate + AMP + diphosphate + H(+). The protein operates within cofactor biosynthesis; (R)-pantothenate biosynthesis; (R)-pantothenate from (R)-pantoate and beta-alanine: step 1/1. Catalyzes the condensation of pantoate with beta-alanine in an ATP-dependent reaction via a pantoyl-adenylate intermediate. The chain is Pantothenate synthetase from Wolinella succinogenes (strain ATCC 29543 / DSM 1740 / CCUG 13145 / JCM 31913 / LMG 7466 / NCTC 11488 / FDC 602W) (Vibrio succinogenes).